The chain runs to 392 residues: Queuine tRNA-ribosyltransferase (392 aa).

Residue Asp93 is the Proton acceptor of the active site. Substrate contacts are provided by residues 93-97 (DSGGY), Asp147, Gln189, and Gly216. The interval 247–253 (GVGAPED) is RNA binding. Asp266 functions as the Nucleophile in the catalytic mechanism. Positions 271–275 (TRVAR) are RNA binding; important for wobble base 34 recognition. Zn(2+)-binding residues include Cys304, Cys306, Cys309, and His335.

This sequence belongs to the queuine tRNA-ribosyltransferase family. Homodimer. Within each dimer, one monomer is responsible for RNA recognition and catalysis, while the other monomer binds to the replacement base PreQ1. It depends on Zn(2+) as a cofactor.

The catalysed reaction is 7-aminomethyl-7-carbaguanine + guanosine(34) in tRNA = 7-aminomethyl-7-carbaguanosine(34) in tRNA + guanine. It participates in tRNA modification; tRNA-queuosine biosynthesis. In terms of biological role, catalyzes the base-exchange of a guanine (G) residue with the queuine precursor 7-aminomethyl-7-deazaguanine (PreQ1) at position 34 (anticodon wobble position) in tRNAs with GU(N) anticodons (tRNA-Asp, -Asn, -His and -Tyr). Catalysis occurs through a double-displacement mechanism. The nucleophile active site attacks the C1' of nucleotide 34 to detach the guanine base from the RNA, forming a covalent enzyme-RNA intermediate. The proton acceptor active site deprotonates the incoming PreQ1, allowing a nucleophilic attack on the C1' of the ribose to form the product. After dissociation, two additional enzymatic reactions on the tRNA convert PreQ1 to queuine (Q), resulting in the hypermodified nucleoside queuosine (7-(((4,5-cis-dihydroxy-2-cyclopenten-1-yl)amino)methyl)-7-deazaguanosine). The chain is Queuine tRNA-ribosyltransferase from Dehalococcoides mccartyi (strain CBDB1).